A 293-amino-acid chain; its full sequence is uncharacterized protein (293 aa).

2 disordered regions span residues 1–95 (MFLR…KDKA) and 268–293 (EETA…GRAL). A phosphoserine mark is found at serine 34, serine 35, and serine 89. Basic and acidic residues-rich tracts occupy residues 85–95 (KRMDSLKKDKA) and 277–286 (GQGKEAKEQT).

This is an uncharacterized protein from Rattus norvegicus (Rat).